The chain runs to 227 residues: MICOS complex subunit Mic19 (227 aa).

A lipid anchor (N-myristoyl glycine) is attached at Gly2. Ser29 carries the phosphoserine modification. The disordered stretch occupies residues 32 to 57 (VIDRMKESSPSGSKSQRYSSVYGASV). Over residues 39–50 (SSPSGSKSQRYS) the composition is skewed to polar residues. Tyr49 bears the Phosphotyrosine mark. 4 positions are modified to phosphoserine: Ser50, Ser51, Ser56, and Ser58. A disordered region spans residues 73–92 (EQAKKESEHQRRLKQARDLE). Lys142 bears the N6-acetyllysine mark. The region spanning 180–222 (HPVCADLQTKILQCYRQNTQQTLSCSALASQYMHCVNHAKQSM) is the CHCH domain. 2 consecutive short sequence motifs (cx9C motif) follow at residues 183–193 (CADLQTKILQC) and 204–214 (CSALASQYMHC). 2 disulfide bridges follow: Cys183/Cys214 and Cys193/Cys204.

It belongs to the MICOS complex subunit Mic19 family. Metazoan Mic19 subfamily. Component of the mitochondrial contact site and cristae organizing system (MICOS) complex, composed of at least MICOS10/MIC10, CHCHD3/MIC19, CHCHD6/MIC25, APOOL/MIC27, IMMT/MIC60, APOO/MIC23/MIC26 and MICOS13/MIC13. This complex was also known under the names MINOS or MitOS complex. The MICOS complex associates with mitochondrial outer membrane proteins SAMM50, MTX1 and MTX2 (together described as components of the mitochondrial outer membrane sorting assembly machinery (SAM) complex) and DNAJC11, mitochondrial inner membrane protein TMEM11 and with HSPA9. The MICOS and SAM complexes together with DNAJC11 are part of a large protein complex spanning both membranes termed the mitochondrial intermembrane space bridging (MIB) complex. Interacts with HSPA1A/HSPA1B and OPA1, preferentially with the soluble OPA1 form.

The protein resides in the mitochondrion inner membrane. The protein localises to the cytoplasm. It is found in the nucleus. It localises to the mitochondrion. Component of the MICOS complex, a large protein complex of the mitochondrial inner membrane that plays crucial roles in the maintenance of crista junctions, inner membrane architecture, and formation of contact sites to the outer membrane. Has also been shown to function as a transcription factor which binds to the BAG1 promoter and represses BAG1 transcription. Plays an important role in the maintenance of the MICOS complex stability and the mitochondrial cristae morphology. The protein is MICOS complex subunit Mic19 (Chchd3) of Mus musculus (Mouse).